Reading from the N-terminus, the 121-residue chain is Putative viral protein-binding protein C1 (121 aa).

Residues 21 to 57 are disordered; it reads PWDRTRGHPDVPWRNLTSSPTRPLAQPAGSCMPAEPS.

As to quaternary structure, interacts with core protein of hepatitis B virus.

The polypeptide is Putative viral protein-binding protein C1 (Homo sapiens (Human)).